We begin with the raw amino-acid sequence, 326 residues long: Histone-lysine N-methyltransferase Suv4-20 (326 aa).

An SET domain is found at 163 to 273 (QECTRYSLEG…AGDEITCFYG (111 aa)). The interval 294–313 (RGKFSTSDEEENDEPSALSE) is disordered.

This sequence belongs to the class V-like SAM-binding methyltransferase superfamily. Histone-lysine methyltransferase family. Suvar4-20 subfamily.

Its subcellular location is the nucleus. The protein localises to the chromosome. The enzyme catalyses N(6)-methyl-L-lysyl(20)-[histone H4] + S-adenosyl-L-methionine = N(6),N(6)-dimethyl-L-lysyl(20)-[histone H4] + S-adenosyl-L-homocysteine + H(+). The catalysed reaction is N(6),N(6)-dimethyl-L-lysyl(20)-[histone H4] + S-adenosyl-L-methionine = N(6),N(6),N(6)-trimethyl-L-lysyl(20)-[histone H4] + S-adenosyl-L-homocysteine + H(+). Functionally, histone methyltransferase that specifically di- and trimethylates 'Lys-20' of histone H4 (H4K20me2/me3). H4 'Lys-20' trimethylation represents a specific tag for epigenetic transcriptional repression. Contributes to dosage compensation of X chromosome-relative to autosome-linked gene expression, possibly by converting H4K20me1 to H4K20m2/me3 on autosomes. Involved in the regulation of growth and body fat metabolism downstream of the TOR complex 2 pathway. The protein is Histone-lysine N-methyltransferase Suv4-20 of Caenorhabditis briggsae.